Consider the following 361-residue polypeptide: Histidinol-phosphate aminotransferase (361 aa).

Residue Lys-219 is modified to N6-(pyridoxal phosphate)lysine.

Belongs to the class-II pyridoxal-phosphate-dependent aminotransferase family. Histidinol-phosphate aminotransferase subfamily. In terms of assembly, homodimer. The cofactor is pyridoxal 5'-phosphate.

The catalysed reaction is L-histidinol phosphate + 2-oxoglutarate = 3-(imidazol-4-yl)-2-oxopropyl phosphate + L-glutamate. It functions in the pathway amino-acid biosynthesis; L-histidine biosynthesis; L-histidine from 5-phospho-alpha-D-ribose 1-diphosphate: step 7/9. The protein is Histidinol-phosphate aminotransferase of Cereibacter sphaeroides (strain ATCC 17023 / DSM 158 / JCM 6121 / CCUG 31486 / LMG 2827 / NBRC 12203 / NCIMB 8253 / ATH 2.4.1.) (Rhodobacter sphaeroides).